A 130-amino-acid polypeptide reads, in one-letter code: Acyl carrier protein 2, chloroplastic (130 aa).

The transit peptide at 1 to 48 (MASITGSSVSFKCAPLQSSFNSKNYALKSSVTFWRRTPVMPRGLSVSC) directs the protein to the chloroplast. In terms of domain architecture, Carrier spans 52-127 (PEMVTKVSDI…EAADMIEALQ (76 aa)). Position 87 is an O-(pantetheine 4'-phosphoryl)serine (Ser87).

It belongs to the acyl carrier protein (ACP) family. Post-translationally, 4'-phosphopantetheine is transferred from CoA to a specific serine of apo-ACP by acpS. This modification is essential for activity because fatty acids are bound in thioester linkage to the sulfhydryl of the prosthetic group. Roots, leaves and seeds.

The protein resides in the plastid. Its subcellular location is the chloroplast. The protein operates within lipid metabolism; fatty acid biosynthesis. In terms of biological role, carrier of the growing fatty acid chain in fatty acid biosynthesis. The polypeptide is Acyl carrier protein 2, chloroplastic (ACL1.2) (Spinacia oleracea (Spinach)).